Here is a 1050-residue protein sequence, read N- to C-terminus: MDAAGRGCHLLPLPAARGPARAPAASSALSPAGLCSGTASASSAAAGAVAMNPSSSAGEERGATGGSSSSGSGAGSCCLGAEGGVDPRGAGAAAAAALEEPAAAGQKEKEEALEEKLRDLTFRKQVSYRKAISRTGLQHLAPAHPLGLPVANGPAKEPRATLDWSENAVNGEHLWLETNVSGDLCYLGEENCQVRFAKSALRRKCAVCKIVVHTACIEQLEKINFRCKPTFREGGSRSPRENFVRHHWVHRRRQEGKCKQCGKGFQQKFSFHSKEIVAISCSWCKQAFHNKVTCFMLHHIEEPCSLGAHAAVIVPPTWIIKVKKPQNSLKASNRKKKRTSFKRKASKRGTEQENKGRPFVIKPISSPLMKPLLVFVNPKSGGNQGTKVLQMFMWYLNPRQVFDLSQEGPKDALELYRKVPNLRILACGGDGTVGWILSILDELQLSPQPPVGVLPLGTGNDLARTLNWGGGYTDEPVSKILCQVEDGTIVQLDRWNLHVERNPDLPPEELEDGVCKLPLNVFNNYFSLGFDAHVTLEFHESREANPEKFNSRFRNKMFYAGAAFSDFLQRSSRDLSKHVKVVCDGTDLTPKIQDLKFQCIVFLNIPRYCAGTMPWGNPGDHHDFEPQRHDDGYIEVIGFTMASLAALQVGGHGERLHQCREVMLLTYKSIPMQVDGEPCRLAPAMIRISLRNQANMVQKSKRRTSMPLLNDPQSVPDRLRIRVNKISLQDYEGLHYDKEKLREASIPLGILVVRGDCDLETCRMYIDRLQEDLQSVSSGSQRVHYQDQETSFPRAISAQRLSPRWCFLDATSADRFYRIDRSQEHLHFVMEISHDEIFILDPDMVVSQQAGTPPGMPDLVVEQASGLSDWWNPALRKRMLSDSGMITPHYEDSDLKDFSHSRVLQSPVSSEDHAILQAVITGDLMKLMESYKNGGSLLIQGPGHCSLLHYAAKTGNGEIVKYILDHGPAELLDMADSETGETALHKAACQRNRAVCQLLVDAGASLRQTDSKGKTPQERAQQAGDPDLAAYLESRQNYKIIGHEDLETAV.

2 disordered regions span residues 52–73 (NPSS…SGSG) and 325–356 (PQNS…ENKG). Residues 332–347 (SNRKKKRTSFKRKASK) show a composition bias toward basic residues. One can recognise a DAGKc domain in the interval 367-502 (PLMKPLLVFV…DRWNLHVERN (136 aa)). 2 ANK repeats span residues 943–972 (GHCS…AELL) and 979–1008 (TGET…SLRQ). The PDZ-binding signature appears at 1048-1050 (TAV).

Belongs to the eukaryotic diacylglycerol kinase family. As to quaternary structure, interacts (via PDZ-binding motif) with DLG4; controls the localization of DGKI to the synapse. Interacts (via PDZ-binding motif) with DLG1. Interacts (via PDZ-binding motif) with DLG2. Interacts (via PDZ-binding motif) with DLG3. May interact with RASGRP3; involved in the regulation of RASGRP3 activity. Specifically expressed in brain (at protein level). Expressed in hippocampus, cerebellum, brain stem and spinal cord (at protein level). Highly expressed in hippocampus, cerebellar cortex, olfactory bulb, and olfactory tubercle and to lower extent in the cerebral cortex, caudate putamen, and thalamus. Not detected in the white matter. Also expressed in eye. In terms of tissue distribution, major isoform in brain (at protein level). As to expression, minor isoform in brain (at protein level). Expressed in brain (at protein level).

The protein resides in the cell projection. Its subcellular location is the axon. The protein localises to the dendrite. It is found in the presynapse. It localises to the postsynapse. The protein resides in the postsynaptic density. Its subcellular location is the synaptic cell membrane. The protein localises to the cytoplasmic vesicle. It is found in the secretory vesicle. It localises to the synaptic vesicle membrane. The protein resides in the cytoplasm. Its subcellular location is the cytosol. The protein localises to the nucleus. It catalyses the reaction a 1,2-diacyl-sn-glycerol + ATP = a 1,2-diacyl-sn-glycero-3-phosphate + ADP + H(+). It carries out the reaction 1,2-di-(9Z-octadecenoyl)-sn-glycerol + ATP = 1,2-di-(9Z-octadecenoyl)-sn-glycero-3-phosphate + ADP + H(+). The catalysed reaction is 1-octadecanoyl-2-(9Z,12Z)-octadecadienoyl-sn-glycerol + ATP = 1-octadecanoyl-2-(9Z,12Z-octadecadienoyl)-sn-glycero-3-phosphate + ADP + H(+). The enzyme catalyses 1-octadecanoyl-2-(5Z,8Z,11Z,14Z-eicosatetraenoyl)-sn-glycerol + ATP = 1-octadecanoyl-2-(5Z,8Z,11Z,14Z-eicosatetraenoyl)-sn-glycero-3-phosphate + ADP + H(+). Its pathway is lipid metabolism; glycerolipid metabolism. With respect to regulation, activated by phosphatidylserine. Diacylglycerol kinase that converts diacylglycerol/DAG into phosphatidic acid/phosphatidate/PA and regulates the respective levels of these two bioactive lipids. Thereby, acts as a central switch between the signaling pathways activated by these second messengers with different cellular targets and opposite effects in numerous biological processes. Has probably no preference for any of the diacylglycerols in terms of the acyl chain composition, especially for the acyl chain at the sn-2 position. By controlling the diacylglycerol/DAG-mediated activation of RASGRP3, negatively regulates the Rap1 signaling pathway. May play a role in presynaptic diacylglycerol/DAG signaling and control neurotransmitter release during metabotropic glutamate receptor-dependent long-term depression. Its function is as follows. Has a decreased affinity for ATP and a reduced diacylglycerol kinase activity. Has no preference for any of the diacylglycerols in terms of the acyl chain composition. In terms of biological role, has no diacylglycerol kinase activity. This Rattus norvegicus (Rat) protein is Diacylglycerol kinase iota.